The following is a 370-amino-acid chain: MRVFTTGQLLGTVVAVQANFYKVQLDQDVREPGSRGAGEEVHLDSPLPLYPLSLLLCTRRTRLKKIGQQVMVGDRVVVEEPDWAGGRGAIAEVLSRQTQLDRPPIANADQILLVFAVADPPLEPYQLSRFLVKAETTGLDVVLCLNKSDLVSPEIQQQISDRLLAWGYQPLFISVEKQINIDQIAKYLSNKITVVAGPSGVGKSSLINALIPDINLRVGEVSGKLARGRHTTRHVELFELPNGGLLADTPGFNQPDVDCSPEELVHYFPEARERLAVASCRFNDCLHRDEPDCAVRGDWERYEHYLEFLADAIARQTQLYQQADPESTLKLKTKGKGQSQYEPKLESKKYRRTSRRTQVQGLQDLYQEEE.

One can recognise a CP-type G domain in the interval 97-255 (QTQLDRPPIA…LADTPGFNQP (159 aa)). GTP contacts are provided by residues 146 to 149 (NKSD) and 197 to 205 (GPSGVGKSS). Zn(2+)-binding residues include C280, C285, H287, and C293. Residues 328 to 370 (TLKLKTKGKGQSQYEPKLESKKYRRTSRRTQVQGLQDLYQEEE) form a disordered region.

It belongs to the TRAFAC class YlqF/YawG GTPase family. RsgA subfamily. In terms of assembly, monomer. Associates with 30S ribosomal subunit, binds 16S rRNA. It depends on Zn(2+) as a cofactor.

It is found in the cytoplasm. One of several proteins that assist in the late maturation steps of the functional core of the 30S ribosomal subunit. Helps release RbfA from mature subunits. May play a role in the assembly of ribosomal proteins into the subunit. Circularly permuted GTPase that catalyzes slow GTP hydrolysis, GTPase activity is stimulated by the 30S ribosomal subunit. This is Small ribosomal subunit biogenesis GTPase RsgA from Trichormus variabilis (strain ATCC 29413 / PCC 7937) (Anabaena variabilis).